A 319-amino-acid chain; its full sequence is Ribonuclease Z (319 aa).

His-62, His-64, Asp-66, His-67, His-145, Asp-215, and His-273 together coordinate Zn(2+). The active-site Proton acceptor is the Asp-66.

It belongs to the RNase Z family. Homodimer. Zn(2+) serves as cofactor.

The catalysed reaction is Endonucleolytic cleavage of RNA, removing extra 3' nucleotides from tRNA precursor, generating 3' termini of tRNAs. A 3'-hydroxy group is left at the tRNA terminus and a 5'-phosphoryl group is left at the trailer molecule.. Functionally, zinc phosphodiesterase, which displays some tRNA 3'-processing endonuclease activity. Probably involved in tRNA maturation, by removing a 3'-trailer from precursor tRNA. In Borrelia duttonii (strain Ly), this protein is Ribonuclease Z.